The following is a 111-amino-acid chain: Large ribosomal subunit protein eL31 (111 aa).

It belongs to the eukaryotic ribosomal protein eL31 family.

This is Large ribosomal subunit protein eL31 (RPL31) from Encephalitozoon cuniculi (strain GB-M1) (Microsporidian parasite).